Here is a 189-residue protein sequence, read N- to C-terminus: Putative lipoprotein LppK (189 aa).

Positions 1–22 are cleaved as a signal peptide; sequence MRRNIRVTLGAATIVAALGLSG. The N-palmitoyl cysteine moiety is linked to residue C23. C23 is lipidated: S-diacylglycerol cysteine. Disordered regions lie at residues 26–49 and 166–189; these read PEFKRSSPPAPSLPPVTSSPLEAA and MGNSPDSTPSATSPAPAPSPTPPG. The segment covering 169–179 has biased composition (low complexity); sequence SPDSTPSATSP. Over residues 180 to 189 the composition is skewed to pro residues; it reads APAPSPTPPG.

Belongs to the MTB12 family.

The protein localises to the cell membrane. This is Putative lipoprotein LppK (lppK) from Mycobacterium tuberculosis (strain CDC 1551 / Oshkosh).